Reading from the N-terminus, the 262-residue chain is Regulatory protein RecX (262 aa).

It belongs to the RecX family.

Its subcellular location is the cytoplasm. Its function is as follows. Modulates RecA activity. The polypeptide is Regulatory protein RecX (Photobacterium profundum (strain SS9)).